Reading from the N-terminus, the 792-residue chain is Pentatricopeptide repeat-containing protein At4g30700 (792 aa).

PPR repeat units lie at residues 51-81 (DISL…VQRP), 82-117 (DVFL…DLKP), 118-152 (NSST…GCDS), 153-183 (ELLL…MPEK), 184-218 (DTIL…SCTR), 220-254 (DTTT…GCYS), 255-285 (HDYV…FRKP), 286-320 (DIVA…GARL), 321-352 (RSST…NFLS), 353-383 (HASV…SPEK), 384-418 (SLPS…EFSP), 419-453 (NPVT…DFES), 454-484 (SIYV…MTKK), 485-519 (NEVT…GITP), 520-555 (TPVT…GFEP), and 556-586 (SVKH…MSIE). The tract at residues 591–666 (VWETLLGACR…APGYTLIEIG (76 aa)) is type E motif. Positions 667–697 (ETPHVFTSGDQSHPQVKEIYEKLEKLEGKMR) are type E(+) motif. The tract at residues 698–792 (EAGYQPETEL…DGVCSCGDYW (95 aa)) is type DYW motif.

This sequence belongs to the PPR family. PCMP-H subfamily.

The protein is Pentatricopeptide repeat-containing protein At4g30700 (DYW9) of Arabidopsis thaliana (Mouse-ear cress).